A 135-amino-acid chain; its full sequence is Small ribosomal subunit protein bS6 (135 aa).

The disordered stretch occupies residues 96-135 (HAEGPSIQMQKRDERERGDRGDRSDRGDRGDRGDRGGFRR). The span at 105–135 (QKRDERERGDRGDRSDRGDRGDRGDRGGFRR) shows a compositional bias: basic and acidic residues.

This sequence belongs to the bacterial ribosomal protein bS6 family.

Its function is as follows. Binds together with bS18 to 16S ribosomal RNA. This is Small ribosomal subunit protein bS6 from Cereibacter sphaeroides (strain ATCC 17029 / ATH 2.4.9) (Rhodobacter sphaeroides).